The sequence spans 202 residues: Holliday junction resolvase RecU (202 aa).

Residues threonine 85, aspartate 87, glutamate 100, and glutamine 119 each coordinate Mg(2+).

This sequence belongs to the RecU family. The cofactor is Mg(2+).

The protein localises to the cytoplasm. It catalyses the reaction Endonucleolytic cleavage at a junction such as a reciprocal single-stranded crossover between two homologous DNA duplexes (Holliday junction).. Endonuclease that resolves Holliday junction intermediates in genetic recombination. Cleaves mobile four-strand junctions by introducing symmetrical nicks in paired strands. Promotes annealing of linear ssDNA with homologous dsDNA. Required for DNA repair, homologous recombination and chromosome segregation. The sequence is that of Holliday junction resolvase RecU from Streptococcus equi subsp. zooepidemicus (strain H70).